Here is a 334-residue protein sequence, read N- to C-terminus: Protein-methionine-sulfoxide reductase catalytic subunit MsrP (334 aa).

Positions 1–44 form a signal peptide, tat-type signal; it reads MKKIRKLTEADVTAESAFFMQRRQVLKALGISAAALSLPNAAHA. Mo-molybdopterin is bound by residues N88, 91-92, C146, T181, N233, R238, and 249-251; these read YE and GIK.

This sequence belongs to the MsrP family. As to quaternary structure, heterodimer of a catalytic subunit (MsrP) and a heme-binding subunit (MsrQ). It depends on Mo-molybdopterin as a cofactor. Post-translationally, predicted to be exported by the Tat system. The position of the signal peptide cleavage has not been experimentally proven.

It localises to the periplasm. The enzyme catalyses L-methionyl-[protein] + a quinone + H2O = L-methionyl-(S)-S-oxide-[protein] + a quinol. It carries out the reaction L-methionyl-[protein] + a quinone + H2O = L-methionyl-(R)-S-oxide-[protein] + a quinol. Functionally, part of the MsrPQ system that repairs oxidized periplasmic proteins containing methionine sulfoxide residues (Met-O), using respiratory chain electrons. Thus protects these proteins from oxidative-stress damage caused by reactive species of oxygen and chlorine generated by the host defense mechanisms. MsrPQ is essential for the maintenance of envelope integrity under bleach stress, rescuing a wide series of structurally unrelated periplasmic proteins from methionine oxidation, including the primary periplasmic chaperone SurA and the lipoprotein Pal. The catalytic subunit MsrP is non-stereospecific, being able to reduce both (R-) and (S-) diastereoisomers of methionine sulfoxide. In Escherichia fergusonii (strain ATCC 35469 / DSM 13698 / CCUG 18766 / IAM 14443 / JCM 21226 / LMG 7866 / NBRC 102419 / NCTC 12128 / CDC 0568-73), this protein is Protein-methionine-sulfoxide reductase catalytic subunit MsrP.